Consider the following 63-residue polypeptide: Large ribosomal subunit protein uL29 (63 aa).

Belongs to the universal ribosomal protein uL29 family.

The chain is Large ribosomal subunit protein uL29 from Enterobacter sp. (strain 638).